A 546-amino-acid chain; its full sequence is Chaperonin GroEL (546 aa).

Residues 30-33, lysine 51, 87-91, glycine 415, and aspartate 496 each bind ATP; these read TLGP and DGTTT. The disordered stretch occupies residues 526-546; the sequence is PQKDAPAGGGMPDMGGMGGMM. Residues 532 to 546 show a composition bias toward gly residues; it reads AGGGMPDMGGMGGMM.

This sequence belongs to the chaperonin (HSP60) family. Forms a cylinder of 14 subunits composed of two heptameric rings stacked back-to-back. Interacts with the co-chaperonin GroES.

It is found in the cytoplasm. The catalysed reaction is ATP + H2O + a folded polypeptide = ADP + phosphate + an unfolded polypeptide.. In terms of biological role, together with its co-chaperonin GroES, plays an essential role in assisting protein folding. The GroEL-GroES system forms a nano-cage that allows encapsulation of the non-native substrate proteins and provides a physical environment optimized to promote and accelerate protein folding. In Ruegeria pomeroyi (strain ATCC 700808 / DSM 15171 / DSS-3) (Silicibacter pomeroyi), this protein is Chaperonin GroEL.